Reading from the N-terminus, the 396-residue chain is MANDYLFTSESVSEGHPDKVADQISDAILDAILAQDKYSRVAAETLCNTGLVVLAGEITTTANVDYIQVARNTIKRIGYDNTDYGIDYRGCAVLVAYDKQSPDIAQGVDRAHDNNLDQGAGDQGLMFGYACEETPELMPLPIHLSHRLVERQANLRRDGRLPWLRPDAKSQVTVRYVDGKPHAIDTVVLSTQHSPDIDLGTLREAVIEEVIKPTLPAELIKGDIKFLVNPTGRFVIGGPQGDCGLTGRKIIVDTYGGAAPHGGGAFSGKDPSKVDRSAAYAGRYVAKNIVAAGLASRCLIQVSYAIGVAQPTSVMVNTFGTGRVSDATITRLVQEHFDLRPKGIIQMLDLLRPIYEKSAAYGHFGREEPEFTWESTDKALALAEAAGTEPVAALAE.

His-16 contributes to the ATP binding site. Mg(2+) is bound at residue Asp-18. Glu-44 provides a ligand contact to K(+). Positions 57 and 100 each coordinate L-methionine. The flexible loop stretch occupies residues 100–110 (QSPDIAQGVDR). Residues 167-169 (DAK), 233-234 (RF), Asp-242, 248-249 (RK), Ala-265, and Lys-269 contribute to the ATP site. Position 242 (Asp-242) interacts with L-methionine. Position 273 (Lys-273) interacts with L-methionine.

It belongs to the AdoMet synthase family. Homotetramer; dimer of dimers. It depends on Mg(2+) as a cofactor. K(+) is required as a cofactor.

The protein localises to the cytoplasm. The catalysed reaction is L-methionine + ATP + H2O = S-adenosyl-L-methionine + phosphate + diphosphate. It participates in amino-acid biosynthesis; S-adenosyl-L-methionine biosynthesis; S-adenosyl-L-methionine from L-methionine: step 1/1. In terms of biological role, catalyzes the formation of S-adenosylmethionine (AdoMet) from methionine and ATP. The overall synthetic reaction is composed of two sequential steps, AdoMet formation and the subsequent tripolyphosphate hydrolysis which occurs prior to release of AdoMet from the enzyme. The protein is S-adenosylmethionine synthase of Paraburkholderia phytofirmans (strain DSM 17436 / LMG 22146 / PsJN) (Burkholderia phytofirmans).